The primary structure comprises 363 residues: Diheme-cytochrome-encapsulin shell fusion protein (363 aa).

The N-terminal stretch at 1–36 (MVMGILNTFKKVYAVTGFFALLAVFSLSQVGSSAFA) is a signal peptide. Residues 37 to 74 (ACAKVDDCFSCHTTQELNAVHKNTPYQGQSCIVCHKAF) form a diheme c-type cytochrome region. Cys-44, Cys-47, His-48, Cys-67, Cys-70, and His-71 together coordinate heme. The interval 75 to 94 (AADDTCSDAKDGRFAKISSE) is linker. An encapsulin domain region spans residues 95–363 (ININKEDWNK…KCPQAICTLE (269 aa)).

It belongs to the encapsulin family. Family 1 subfamily. The encapsulin nanocompartment is probably formed by 180 monomers, with the N-terminus (diheme domain) inside. There are 36 pores where the pentamers meet as well as 3-fold axis channels and dimer channels. Heme serves as cofactor.

The protein localises to the encapsulin nanocompartment. In terms of biological role, fusion of the shell and cargo protein of a type 1 encapsulin nanocompartment. Protein missing its signal peptide makes 33 nm particles in E.coli (called cEnc), protein missing its signal peptide and diheme domain (residues 1-86, called Enc) makes 29 nm particles. The cEnc nancompartment encloses c-type heme. The cargo protein NIR-HAO (AC P0DV45) is probably targeted to the nanocompartment by its association with the diheme domain in cEnc; removal of the diheme domain in Enc halves the amount of cargo. The polypeptide is Diheme-cytochrome-encapsulin shell fusion protein (Kuenenia stuttgartiensis).